Reading from the N-terminus, the 343-residue chain is Dihydroorotase (343 aa).

Zn(2+) contacts are provided by His13 and His15. Residues 15–17 (HLR) and Asn41 each bind substrate. Zn(2+) is bound by residues Lys99, His136, and His174. Lys99 carries the post-translational modification N6-carboxylysine. His136 contacts substrate. Leu219 is a substrate binding site. A Zn(2+)-binding site is contributed by Asp247. Residue Asp247 is part of the active site. Residues His251 and Ala263 each coordinate substrate.

The protein belongs to the metallo-dependent hydrolases superfamily. DHOase family. Class II DHOase subfamily. As to quaternary structure, homodimer. It depends on Zn(2+) as a cofactor.

It catalyses the reaction (S)-dihydroorotate + H2O = N-carbamoyl-L-aspartate + H(+). Its pathway is pyrimidine metabolism; UMP biosynthesis via de novo pathway; (S)-dihydroorotate from bicarbonate: step 3/3. In terms of biological role, catalyzes the reversible cyclization of carbamoyl aspartate to dihydroorotate. This is Dihydroorotase from Shewanella putrefaciens (strain CN-32 / ATCC BAA-453).